A 202-amino-acid polypeptide reads, in one-letter code: Nigerythrin (202 aa).

Residues 23–168 (KTAVGSTLEN…AYNDIDAPDD (146 aa)) enclose the Ferritin-like diiron domain. Fe cation-binding residues include Glu-40, Glu-73, Glu-115, Glu-118, Glu-149, His-152, Cys-174, Cys-177, Cys-189, and Cys-192. In terms of domain architecture, Rubredoxin-like spans 169–202 (DKFHLCPICGYIHKGEDFEKCPICFRPKDTFTAY).

In terms of assembly, homodimer. May possess two rubredoxin-like centers and two hemerythrin-like binuclear-iron centers per dimer.

The protein localises to the cytoplasm. Exhibits NADH peroxidase activity (in vitro). This is Nigerythrin (ngr) from Nitratidesulfovibrio vulgaris (strain ATCC 29579 / DSM 644 / CCUG 34227 / NCIMB 8303 / VKM B-1760 / Hildenborough) (Desulfovibrio vulgaris).